A 197-amino-acid polypeptide reads, in one-letter code: Glycerol-3-phosphate acyltransferase (197 aa).

A run of 5 helical transmembrane segments spans residues 6–26 (LFIVLLLLSYLIGSISTAIIV), 58–78 (AITLIGDGLKGAIPVLIAHYL), 82–102 (MLNVTWVILVTFLGHVYPIFF), 116–136 (ALLALSYLTGLSFIITWVFVA), and 157–177 (FYLITNNLASTYVIILICLWI).

Belongs to the PlsY family. In terms of assembly, probably interacts with PlsX.

The protein localises to the cell inner membrane. It carries out the reaction an acyl phosphate + sn-glycerol 3-phosphate = a 1-acyl-sn-glycero-3-phosphate + phosphate. Its pathway is lipid metabolism; phospholipid metabolism. Functionally, catalyzes the transfer of an acyl group from acyl-phosphate (acyl-PO(4)) to glycerol-3-phosphate (G3P) to form lysophosphatidic acid (LPA). This enzyme utilizes acyl-phosphate as fatty acyl donor, but not acyl-CoA or acyl-ACP. In Ruthia magnifica subsp. Calyptogena magnifica, this protein is Glycerol-3-phosphate acyltransferase.